A 144-amino-acid polypeptide reads, in one-letter code: Noggin (144 aa).

The first 4 residues, 1–4, serve as a signal peptide directing secretion; sequence GGGG. Disulfide bonds link cysteine 67/cysteine 104, cysteine 90/cysteine 140, cysteine 96/cysteine 142, and cysteine 119/cysteine 127.

Belongs to the noggin family. In terms of assembly, homodimer. Interacts with GDF5; inhibits chondrocyte differentiation. As to expression, prominently expressed in the CNS. High levels found in mitral and tufted cells in the olfactory bulb, piriform cortex of the brain and Purkinje cells in the cerebellum. Low level expression seen in the lung, skeletal muscle and skin.

Its subcellular location is the secreted. Essential for cartilage morphogenesis and joint formation. Inhibitor of bone morphogenetic proteins (BMP) signaling which is required for growth and patterning of the neural tube and somite. Inhibits chondrocyte differentiation through its interaction with GDF5 and, probably, GDF6. In Rattus norvegicus (Rat), this protein is Noggin (Nog).